Reading from the N-terminus, the 132-residue chain is Intraflagellar transport protein 20 homolog (132 aa).

Positions 74–123 (GARNLLKSVEKQREAQHQQLQALIAEKKMQLERYRIEYEALQKVEAEQSE) form a coiled coil.

It is found in the golgi apparatus. Its subcellular location is the cis-Golgi network. The protein resides in the cytoplasm. The protein localises to the cytoskeleton. It localises to the microtubule organizing center. It is found in the centrosome. Its subcellular location is the centriole. The protein resides in the cell projection. The protein localises to the cilium. It localises to the cytoplasmic vesicle. It is found in the secretory vesicle. Its subcellular location is the acrosome. In terms of biological role, involved in ciliary process assembly. May play a role in the trafficking of ciliary membrane proteins from the Golgi complex to the cilium. Regulates the platelet-derived growth factor receptor-alpha (PDGFRA) signaling pathway. Plays an important role in spermatogenesis, particularly spermiogenesis, when germ cells form flagella. In Danio rerio (Zebrafish), this protein is Intraflagellar transport protein 20 homolog (ift20).